The primary structure comprises 429 residues: SVP1-like protein 2 (429 aa).

WD repeat units follow at residues 10 to 48 (PVLAPVLSVTFNHDNSCFAVGLDHGFRIYESGSCVLRTS), 50 to 96 (DFGA…QVGV), 178 to 218 (AHTS…RLYE), and 223 to 262 (IDKAIIFSIGFSPSGKYLACTSDKSTLHVFDVTRPGGTRP). The segment at 262 to 297 (PITSNGGTAYAAGEPSVTGNNRPSSPYSVASSSGGG) is disordered.

The protein belongs to the WD repeat PROPPIN family.

Its subcellular location is the vacuole membrane. The protein localises to the cytoplasmic vesicle membrane. Its function is as follows. Involved in mitochondrial or peroxisomal functions and amino acid signaling pathways. The sequence is that of SVP1-like protein 2 (apg-14) from Neurospora crassa (strain ATCC 24698 / 74-OR23-1A / CBS 708.71 / DSM 1257 / FGSC 987).